The chain runs to 320 residues: Polyadenylate-binding protein-interacting protein 13 (320 aa).

Residues 1–44 are disordered; the sequence is MAVAENVGVKVDSSNNQNIDNNTTSLVETKPSCSDDQTPKSKSS. Residues 12–44 are compositionally biased toward polar residues; sequence DSSNNQNIDNNTTSLVETKPSCSDDQTPKSKSS. A PAM2-like motif is present at residues 65–75; it reads HLNPMAKEFVP. 2 RRM domains span residues 137–212 and 234–310; these read RTVY…MSKT and KTVY…PSKT.

The chain is Polyadenylate-binding protein-interacting protein 13 (CID13) from Arabidopsis thaliana (Mouse-ear cress).